Here is a 179-residue protein sequence, read N- to C-terminus: Large ribosomal subunit protein uL5 (179 aa).

This sequence belongs to the universal ribosomal protein uL5 family. As to quaternary structure, part of the 50S ribosomal subunit; part of the 5S rRNA/L5/L18/L25 subcomplex. Contacts the 5S rRNA and the P site tRNA. Forms a bridge to the 30S subunit in the 70S ribosome.

Functionally, this is one of the proteins that bind and probably mediate the attachment of the 5S RNA into the large ribosomal subunit, where it forms part of the central protuberance. In the 70S ribosome it contacts protein S13 of the 30S subunit (bridge B1b), connecting the 2 subunits; this bridge is implicated in subunit movement. Contacts the P site tRNA; the 5S rRNA and some of its associated proteins might help stabilize positioning of ribosome-bound tRNAs. In Pseudomonas aeruginosa (strain LESB58), this protein is Large ribosomal subunit protein uL5.